Here is a 901-residue protein sequence, read N- to C-terminus: Protein translocase subunit SecA (901 aa).

Residues Gln87, 105–109 (GEGKT), and Asp512 contribute to the ATP site. The tract at residues 858 to 891 (SHQDDDTAAAAALAAQTGDRKVGRNDPCPCGSGK) is disordered. Cys885, Cys887, Cys896, and His897 together coordinate Zn(2+).

The protein belongs to the SecA family. Monomer and homodimer. Part of the essential Sec protein translocation apparatus which comprises SecA, SecYEG and auxiliary proteins SecDF-YajC and YidC. The cofactor is Zn(2+).

The protein localises to the cell inner membrane. The protein resides in the cytoplasm. It carries out the reaction ATP + H2O + cellular proteinSide 1 = ADP + phosphate + cellular proteinSide 2.. In terms of biological role, part of the Sec protein translocase complex. Interacts with the SecYEG preprotein conducting channel. Has a central role in coupling the hydrolysis of ATP to the transfer of proteins into and across the cell membrane, serving both as a receptor for the preprotein-SecB complex and as an ATP-driven molecular motor driving the stepwise translocation of polypeptide chains across the membrane. This Escherichia fergusonii (strain ATCC 35469 / DSM 13698 / CCUG 18766 / IAM 14443 / JCM 21226 / LMG 7866 / NBRC 102419 / NCTC 12128 / CDC 0568-73) protein is Protein translocase subunit SecA.